Reading from the N-terminus, the 339-residue chain is DNA-directed RNA polymerase subunit alpha (339 aa).

The interval 1-233 (MVREKVRIST…DLFIPFLHAE (233 aa)) is alpha N-terminal domain (alpha-NTD). The tract at residues 267 to 339 (IALKSIFIDQ…FTINLPKNKF (73 aa)) is alpha C-terminal domain (alpha-CTD).

This sequence belongs to the RNA polymerase alpha chain family. In plastids the minimal PEP RNA polymerase catalytic core is composed of four subunits: alpha, beta, beta', and beta''. When a (nuclear-encoded) sigma factor is associated with the core the holoenzyme is formed, which can initiate transcription.

The protein localises to the plastid. Its subcellular location is the chloroplast. It carries out the reaction RNA(n) + a ribonucleoside 5'-triphosphate = RNA(n+1) + diphosphate. In terms of biological role, DNA-dependent RNA polymerase catalyzes the transcription of DNA into RNA using the four ribonucleoside triphosphates as substrates. This Populus trichocarpa (Western balsam poplar) protein is DNA-directed RNA polymerase subunit alpha.